Consider the following 261-residue polypeptide: Small ribosomal subunit protein uS2 (261 aa).

This sequence belongs to the universal ribosomal protein uS2 family.

In Rhodospirillum centenum (strain ATCC 51521 / SW), this protein is Small ribosomal subunit protein uS2.